We begin with the raw amino-acid sequence, 115 residues long: Ig heavy chain V-III region J606 (115 aa).

The 114-residue stretch at 1 to 114 (EVKLEESGGG…WGQGTLVTVS (114 aa)) folds into the Ig-like domain. Cysteines 22 and 98 form a disulfide.

This Mus musculus (Mouse) protein is Ig heavy chain V-III region J606.